Here is a 60-residue protein sequence, read N- to C-terminus: MDPKLLELLVCPVTKGPLTYDRERDELVSRSARLAYPVRDGIPVLLETEARPLTDAELEA.

The protein belongs to the UPF0434 family.

The protein is UPF0434 protein Aave_2563 of Paracidovorax citrulli (strain AAC00-1) (Acidovorax citrulli).